The primary structure comprises 273 residues: Co-chaperone protein DjlA (273 aa).

Over 1-6 (MHYWGK) the chain is Periplasmic. A helical transmembrane segment spans residues 7–31 (LLGLIFGVVSGAGFWGIVIGLFIGH). Residues 32–273 (MLDRASVRGN…DLIKKEKGFK (242 aa)) lie on the Cytoplasmic side of the membrane. Residues 207–273 (DACKVLGVRE…DLIKKEKGFK (67 aa)) enclose the J domain.

Homodimer.

It is found in the cell inner membrane. In terms of biological role, regulatory DnaK co-chaperone. Direct interaction between DnaK and DjlA is needed for the induction of the wcaABCDE operon, involved in the synthesis of a colanic acid polysaccharide capsule, possibly through activation of the RcsB/RcsC phosphotransfer signaling pathway. The colanic acid capsule may help the bacterium survive conditions outside the host. This is Co-chaperone protein DjlA from Photorhabdus laumondii subsp. laumondii (strain DSM 15139 / CIP 105565 / TT01) (Photorhabdus luminescens subsp. laumondii).